Here is a 221-residue protein sequence, read N- to C-terminus: Octanoyltransferase (221 aa).

Residues 35 to 221 form the BPL/LPL catalytic domain; that stretch reads ESYENRIIFC…RELLAALLSK (187 aa). Substrate contacts are provided by residues 80–87, 152–154, and 165–167; these read RGGDITYH, AIG, and GLA. Cys183 acts as the Acyl-thioester intermediate in catalysis.

This sequence belongs to the LipB family.

It is found in the cytoplasm. The catalysed reaction is octanoyl-[ACP] + L-lysyl-[protein] = N(6)-octanoyl-L-lysyl-[protein] + holo-[ACP] + H(+). Its pathway is protein modification; protein lipoylation via endogenous pathway; protein N(6)-(lipoyl)lysine from octanoyl-[acyl-carrier-protein]: step 1/2. Functionally, catalyzes the transfer of endogenously produced octanoic acid from octanoyl-acyl-carrier-protein onto the lipoyl domains of lipoate-dependent enzymes. Lipoyl-ACP can also act as a substrate although octanoyl-ACP is likely to be the physiological substrate. The chain is Octanoyltransferase from Bacteroides fragilis (strain YCH46).